A 343-amino-acid chain; its full sequence is Signal peptide peptidase 2 (343 aa).

The Lumenal portion of the chain corresponds to 1-19 (MKTHERAANLALAGLSLAP). The helical transmembrane segment at 20 to 40 (LVVKVNPNANVILTACLAVYV) threads the bilayer. Topologically, residues 41–62 (GCYRSVKPTPPAETMSKEHAMR) are cytoplasmic. A helical transmembrane segment spans residues 63 to 83 (FPLVGSAMLLSLFLLFKFLSK). The Lumenal portion of the chain corresponds to 84-89 (DLVNTV). Residues 90–110 (LTAYFFILGIAALCATLLPSI) traverse the membrane as a helical segment. The Cytoplasmic segment spans residues 111–141 (KRFLPKEWNDNAIVWRAPLFHSLSVEFTRSQ). Residues 142-162 (VVASIPGFFFCIWYAAKKHWL) traverse the membrane as a helical segment. The Lumenal segment spans residues 163-165 (ANN). Residues 166 to 186 (VLGISFCIQGIEMLSLGSFKT) form a helical membrane-spanning segment. The Cytoplasmic portion of the chain corresponds to 187-188 (GA). The chain crosses the membrane as a helical span at residues 189–209 (ILLSGLFFYDIFWVFFTPVMV). The active site involves Asp198. The Lumenal segment spans residues 210–230 (SVAKSFDAPIKLLFPTGDAAR). A helical membrane pass occupies residues 231–251 (PFSMLGLGDIVIPGIFVALAL). The active site involves Asp239. The Cytoplasmic portion of the chain corresponds to 252–266 (RFDVSRGIKNRYFNS). Residues 267-287 (AFLGYTVGLTVTIIVMNWFQA) traverse the membrane as a helical segment. Topologically, residues 288-290 (AQP) are lumenal. The short motif at 290–292 (PAL) is the PAL element. Residues 291–311 (ALLYIVPGVIGFVAVHCLWNG) form a helical membrane-spanning segment. The Cytoplasmic portion of the chain corresponds to 312 to 343 (EVKPLLEYNESKAEEEEACEEDTDSKQNKKKE). The span at 324-334 (AEEEEACEEDT) shows a compositional bias: acidic residues. Residues 324 to 343 (AEEEEACEEDTDSKQNKKKE) form a disordered region. The Endoplasmic reticulum targeting signal motif lies at 340–343 (KKKE).

It belongs to the peptidase A22B family. Ubiquitous.

It is found in the endoplasmic reticulum membrane. Its function is as follows. Intramembrane-cleaving aspartic protease (I-CLiP) that cleaves type II membrane signal peptides in the hydrophobic plane of the membrane. Catalyzes intramembrane proteolysis of some signal peptides after they have been cleaved from a preprotein, resulting in the release of the fragment from the ER membrane into the cytoplasm. In Oryza sativa subsp. japonica (Rice), this protein is Signal peptide peptidase 2 (SPP2).